The following is a 141-amino-acid chain: Nucleoside diphosphate kinase (141 aa).

Residues lysine 11, phenylalanine 59, arginine 87, threonine 93, arginine 104, and asparagine 114 each coordinate ATP. The active-site Pros-phosphohistidine intermediate is the histidine 117.

It belongs to the NDK family. As to quaternary structure, homotetramer. Mg(2+) is required as a cofactor.

The protein resides in the cytoplasm. The enzyme catalyses a 2'-deoxyribonucleoside 5'-diphosphate + ATP = a 2'-deoxyribonucleoside 5'-triphosphate + ADP. The catalysed reaction is a ribonucleoside 5'-diphosphate + ATP = a ribonucleoside 5'-triphosphate + ADP. In terms of biological role, major role in the synthesis of nucleoside triphosphates other than ATP. The ATP gamma phosphate is transferred to the NDP beta phosphate via a ping-pong mechanism, using a phosphorylated active-site intermediate. The sequence is that of Nucleoside diphosphate kinase from Azoarcus sp. (strain BH72).